The sequence spans 487 residues: UDP-N-acetylmuramate--L-alanine ligase (487 aa).

Residue 129–135 (GTHGKTT) coordinates ATP.

It belongs to the MurCDEF family.

The protein resides in the cytoplasm. It carries out the reaction UDP-N-acetyl-alpha-D-muramate + L-alanine + ATP = UDP-N-acetyl-alpha-D-muramoyl-L-alanine + ADP + phosphate + H(+). It participates in cell wall biogenesis; peptidoglycan biosynthesis. Functionally, cell wall formation. This chain is UDP-N-acetylmuramate--L-alanine ligase, found in Aliivibrio fischeri (strain ATCC 700601 / ES114) (Vibrio fischeri).